A 358-amino-acid polypeptide reads, in one-letter code: Neutral protease 2 homolog PABG_02362 (358 aa).

An N-terminal signal peptide occupies residues 1–19; sequence MRRVSGILAVAAFTISAFA. Residues 20 to 182 constitute a propeptide that is removed on maturation; that stretch reads GVIQPVAKDA…FAAMNQFVKI (163 aa). 2 disulfides stabilise this stretch: Cys-188-Cys-259 and Cys-266-Cys-284. Asn-249 carries N-linked (GlcNAc...) asparagine glycosylation. Residue His-309 coordinates Zn(2+). Glu-310 is an active-site residue. His-313 and Asp-324 together coordinate Zn(2+).

The protein belongs to the peptidase M35 family. Zn(2+) is required as a cofactor.

The protein resides in the secreted. It carries out the reaction Preferential cleavage of bonds with hydrophobic residues in P1'. Also 3-Asn-|-Gln-4 and 8-Gly-|-Ser-9 bonds in insulin B chain.. Its function is as follows. Secreted metalloproteinase that allows assimilation of proteinaceous substrates. Shows high activities on basic nuclear substrates such as histone and protamine. The sequence is that of Neutral protease 2 homolog PABG_02362 from Paracoccidioides brasiliensis (strain Pb03).